The chain runs to 135 residues: Small ribosomal subunit protein bS6 (135 aa).

Residues 98–135 (EASPMAKAKDERDARRAAISERSSEADEVEENAEESAE) are disordered. Residues 104 to 122 (KAKDERDARRAAISERSSE) are compositionally biased toward basic and acidic residues. Acidic residues predominate over residues 123-135 (ADEVEENAEESAE).

Belongs to the bacterial ribosomal protein bS6 family.

Binds together with bS18 to 16S ribosomal RNA. The chain is Small ribosomal subunit protein bS6 from Shewanella amazonensis (strain ATCC BAA-1098 / SB2B).